The chain runs to 355 residues: 3-dehydroquinate synthase (355 aa).

NAD(+) is bound by residues 71–76 (EGEASK), 105–109 (GVVGD), 129–130 (TS), Lys-142, and Lys-151. Zn(2+)-binding residues include Glu-184, His-246, and His-263.

Belongs to the sugar phosphate cyclases superfamily. Dehydroquinate synthase family. The cofactor is Co(2+). It depends on Zn(2+) as a cofactor. NAD(+) serves as cofactor.

The protein resides in the cytoplasm. It carries out the reaction 7-phospho-2-dehydro-3-deoxy-D-arabino-heptonate = 3-dehydroquinate + phosphate. It participates in metabolic intermediate biosynthesis; chorismate biosynthesis; chorismate from D-erythrose 4-phosphate and phosphoenolpyruvate: step 2/7. In terms of biological role, catalyzes the conversion of 3-deoxy-D-arabino-heptulosonate 7-phosphate (DAHP) to dehydroquinate (DHQ). The polypeptide is 3-dehydroquinate synthase (Streptococcus sanguinis (strain SK36)).